A 37-amino-acid chain; its full sequence is Large ribosomal subunit protein bL36 (37 aa).

It belongs to the bacterial ribosomal protein bL36 family.

The chain is Large ribosomal subunit protein bL36 from Cyanothece sp. (strain PCC 7425 / ATCC 29141).